We begin with the raw amino-acid sequence, 214 residues long: Adenylate kinase (214 aa).

10–15 (GAGKGT) serves as a coordination point for ATP. The tract at residues 30–59 (STGDMLRAAVKAGSELGKQAKAIMDAGKLV) is NMP. Residues Thr31, Arg36, 57-59 (KLV), 85-88 (GFPR), and Gln92 contribute to the AMP site. The LID stretch occupies residues 122 to 159 (GRRVHPGSGRVYHVKFNPPQVEGKDDVTGEDLMTRKDD). Residues Arg123 and 132-133 (VY) contribute to the ATP site. The AMP site is built by Arg156 and Arg167. An ATP-binding site is contributed by Gln200.

The protein belongs to the adenylate kinase family. As to quaternary structure, monomer.

Its subcellular location is the cytoplasm. The catalysed reaction is AMP + ATP = 2 ADP. It functions in the pathway purine metabolism; AMP biosynthesis via salvage pathway; AMP from ADP: step 1/1. Catalyzes the reversible transfer of the terminal phosphate group between ATP and AMP. Plays an important role in cellular energy homeostasis and in adenine nucleotide metabolism. This chain is Adenylate kinase, found in Edwardsiella ictaluri (strain 93-146).